A 315-amino-acid polypeptide reads, in one-letter code: Cobalamin biosynthesis protein CobD (315 aa).

The next 5 helical transmembrane spans lie at 54 to 74 (GLLFVLTVGMTGVVSWFILFL), 78 to 98 (IAYWLYVAVFVYLGYTTLAMT), 152 to 172 (ADGVIAPLFYLFIGGPVLALM), 203 to 223 (IANFIPARLAWFFLVIASFIL), and 295 to 315 (LLYTASTIAFIIFASIYLLLF).

The protein belongs to the CobD/CbiB family.

The protein localises to the cell membrane. Its pathway is cofactor biosynthesis; adenosylcobalamin biosynthesis. Converts cobyric acid to cobinamide by the addition of aminopropanol on the F carboxylic group. The chain is Cobalamin biosynthesis protein CobD from Listeria monocytogenes serotype 4b (strain F2365).